We begin with the raw amino-acid sequence, 38 residues long: Large ribosomal subunit protein bL36 (38 aa).

This sequence belongs to the bacterial ribosomal protein bL36 family.

This Baumannia cicadellinicola subsp. Homalodisca coagulata protein is Large ribosomal subunit protein bL36.